The primary structure comprises 453 residues: Mitochondrial import inner membrane translocase subunit TIM44 (453 aa).

T129 is subject to Phosphothreonine. 167-174 (GGEKLGKT) lines the ATP pocket. N6-succinyllysine is present on K178. A Phosphoserine modification is found at S181. K218 is subject to N6-succinyllysine.

This sequence belongs to the Tim44 family. As to quaternary structure, probable component of the PAM complex at least composed of a mitochondrial HSP70 protein, GRPEL1 or GRPEL2, TIMM44, TIMM16/PAM16 and TIMM14/DNAJC19. The complex interacts with the TIMM23 component of the TIM23 complex. Interacts with SLC25A4/ANT1 and SLC25A5/ANT2; leading to inhibit the presequence translocase TIMM23, thereby promoting stabilization of PINK1.

Its subcellular location is the mitochondrion inner membrane. It localises to the mitochondrion matrix. Functionally, essential component of the PAM complex, a complex required for the translocation of transit peptide-containing proteins from the inner membrane into the mitochondrial matrix in an ATP-dependent manner. Recruits mitochondrial HSP70 to drive protein translocation into the matrix using ATP as an energy source. The chain is Mitochondrial import inner membrane translocase subunit TIM44 (Timm44) from Rattus norvegicus (Rat).